Reading from the N-terminus, the 359-residue chain is Archaemetzincin-2 (359 aa).

H254 contacts Zn(2+). E255 acts as the Proton acceptor in catalysis. Residues H258, H264, C265, C270, C289, and C292 each contribute to the Zn(2+) site.

Belongs to the peptidase M54 family. Zn(2+) is required as a cofactor. In terms of tissue distribution, predominantly expressed in testis.

Functionally, probable zinc metalloprotease. This chain is Archaemetzincin-2 (Amz2), found in Mus musculus (Mouse).